A 279-amino-acid chain; its full sequence is MEQQEKKKRKIQRSISTQSSSMSSIPLDVTSKILAKLPAKSVLRARCVSKQWSSISTDPYFISNMFPKQSSSSLLIFFKPKRKLFVISIHQNPNEPQHVGICPRLDLFPNSKKTHYLEPYLEKILNLAQTQKQLEGNTIGDNDGQCINGVLYYRASLDQSNVDIIMSFDVSTMYNKDITLWVLEDAKWLCKHFTRASYNDQPLQALSGINGITDDGEFIYVAYVLDSFYILYYDPEKKSYRRVDLQGVGDADFMLRNGLGNMDGIRIHTCLNIESLLSL.

One can recognise an F-box domain in the interval 19-69 (SSSMSSIPLDVTSKILAKLPAKSVLRARCVSKQWSSISTDPYFISNMFPKQ).

In Arabidopsis thaliana (Mouse-ear cress), this protein is Putative F-box protein At1g50880.